The sequence spans 113 residues: Flagellar hook-basal body complex protein FliE (113 aa).

The protein belongs to the FliE family.

It is found in the bacterial flagellum basal body. The sequence is that of Flagellar hook-basal body complex protein FliE from Burkholderia mallei (strain NCTC 10247).